The sequence spans 174 residues: Shikimate kinase 2 (174 aa).

Glycine 12–threonine 17 serves as a coordination point for ATP. Residues threonine 16 and aspartate 32 each contribute to the Mg(2+) site. Aspartate 34, arginine 58, and glycine 79 together coordinate substrate. The interval glutamine 112 to lysine 126 is LID domain. Arginine 120 is a binding site for ATP. Substrate is bound at residue arginine 139.

This sequence belongs to the shikimate kinase family. AroL subfamily. As to quaternary structure, monomer. Requires Mg(2+) as cofactor.

It is found in the cytoplasm. The enzyme catalyses shikimate + ATP = 3-phosphoshikimate + ADP + H(+). It functions in the pathway metabolic intermediate biosynthesis; chorismate biosynthesis; chorismate from D-erythrose 4-phosphate and phosphoenolpyruvate: step 5/7. In terms of biological role, catalyzes the specific phosphorylation of the 3-hydroxyl group of shikimic acid using ATP as a cosubstrate. The polypeptide is Shikimate kinase 2 (Escherichia coli O1:K1 / APEC).